Here is a 253-residue protein sequence, read N- to C-terminus: uncharacterized protein (253 aa).

This is an uncharacterized protein from Ostreid herpesvirus 1 (isolate France) (OsHV-1).